The sequence spans 373 residues: L-threonine 3-dehydrogenase, mitochondrial (373 aa).

Residues 62-67, 88-90, 106-107, Tyr195, Lys199, and Ile225 contribute to the NAD(+) site; these read GGLGQL, DIR, and NI. The active-site Proton donor/acceptor is the Tyr195.

Belongs to the NAD(P)-dependent epimerase/dehydratase family. Homodimer.

It is found in the mitochondrion. The catalysed reaction is L-threonine + NAD(+) = (2S)-2-amino-3-oxobutanoate + NADH + H(+). It participates in amino-acid degradation; L-threonine degradation via oxydo-reductase pathway; glycine from L-threonine: step 1/2. Functionally, catalyzes the NAD(+)-dependent oxidation of L-threonine to 2-amino-3-ketobutyrate, mediating L-threonine catabolism. This is L-threonine 3-dehydrogenase, mitochondrial from Mus musculus (Mouse).